The sequence spans 522 residues: Peptide methionine sulfoxide reductase MsrA/MsrB (522 aa).

The region spanning 17-174 (LALGACSPKI…ALALIRNPNA (158 aa)) is the Thioredoxin domain. A disulfide bridge links Cys68 with Cys71. The interval 199–354 (RTIYLAGGCF…PNGYCHIDIR (156 aa)) is peptide methionine sulfoxide reductase A. Cys207 is an active-site residue. Positions 383-506 (DAELKRTLTE…NGASLKFIPL (124 aa)) constitute a MsrB domain. An intrachain disulfide couples Cys440 to Cys495. Cys495 functions as the Nucleophile in the catalytic mechanism.

The protein in the N-terminal section; belongs to the thioredoxin family. This sequence in the central section; belongs to the MsrA Met sulfoxide reductase family. In the C-terminal section; belongs to the MsrB Met sulfoxide reductase family.

The enzyme catalyses L-methionyl-[protein] + [thioredoxin]-disulfide + H2O = L-methionyl-(S)-S-oxide-[protein] + [thioredoxin]-dithiol. It carries out the reaction [thioredoxin]-disulfide + L-methionine + H2O = L-methionine (S)-S-oxide + [thioredoxin]-dithiol. It catalyses the reaction L-methionyl-[protein] + [thioredoxin]-disulfide + H2O = L-methionyl-(R)-S-oxide-[protein] + [thioredoxin]-dithiol. Has an important function as a repair enzyme for proteins that have been inactivated by oxidation. Catalyzes the reversible oxidation-reduction of methionine sulfoxide in proteins to methionine. This Neisseria gonorrhoeae protein is Peptide methionine sulfoxide reductase MsrA/MsrB (msrAB).